The sequence spans 469 residues: 2-oxoisovalerate dehydrogenase subunit beta, mitochondrial (469 aa).

The N-terminal 40 residues, 1 to 40, are a transit peptide targeting the mitochondrion; that stretch reads MKRSTVVIRPSARALSRQASSQSFLLARSSALTSRQRRLY. Position 167 (tyrosine 167) interacts with thiamine diphosphate. Residues glycine 194, leucine 196, and threonine 197 each coordinate K(+).

As to quaternary structure, heterotetramer of 2 alpha and 2 beta chains. Thiamine diphosphate serves as cofactor.

It is found in the mitochondrion matrix. It catalyses the reaction N(6)-[(R)-lipoyl]-L-lysyl-[protein] + 3-methyl-2-oxobutanoate + H(+) = N(6)-[(R)-S(8)-2-methylpropanoyldihydrolipoyl]-L-lysyl-[protein] + CO2. In terms of biological role, the branched-chain alpha-keto dehydrogenase complex catalyzes the overall conversion of alpha-keto acids to acyl-CoA and CO(2). It contains multiple copies of three enzymatic components: branched-chain alpha-keto acid decarboxylase (E1), lipoamide acyltransferase (E2) and lipoamide dehydrogenase (E3). This is 2-oxoisovalerate dehydrogenase subunit beta, mitochondrial from Chaetomium thermophilum (strain DSM 1495 / CBS 144.50 / IMI 039719) (Thermochaetoides thermophila).